The sequence spans 230 residues: Ribonuclease 3 (230 aa).

Residues 5 to 134 (EALLKSSFAI…FLGALLLDKG (130 aa)) enclose the RNase III domain. Glutamate 47 is a binding site for Mg(2+). Residue aspartate 51 is part of the active site. Aspartate 120 and glutamate 123 together coordinate Mg(2+). The active site involves glutamate 123. A DRBM domain is found at 160 to 229 (DYKTSLQEIL…AENALKALSE (70 aa)).

The protein belongs to the ribonuclease III family. In terms of assembly, homodimer. Requires Mg(2+) as cofactor.

It localises to the cytoplasm. It carries out the reaction Endonucleolytic cleavage to 5'-phosphomonoester.. In terms of biological role, digests double-stranded RNA. Involved in the processing of primary rRNA transcript to yield the immediate precursors to the large and small rRNAs (23S and 16S). Processes some mRNAs, and tRNAs when they are encoded in the rRNA operon. Processes pre-crRNA and tracrRNA of type II CRISPR loci if present in the organism. This chain is Ribonuclease 3, found in Streptococcus uberis (strain ATCC BAA-854 / 0140J).